Here is a 287-residue protein sequence, read N- to C-terminus: Acetyl-coenzyme A carboxylase carboxyl transferase subunit beta (287 aa).

One can recognise a CoA carboxyltransferase N-terminal domain in the interval 25–287 (IWTKCSGCVQ…KLTQQSFSEK (263 aa)). Residues cysteine 29, cysteine 32, cysteine 48, and cysteine 51 each coordinate Zn(2+). The segment at 29–51 (CSGCVQLLYTKELERNLQVCPKC) adopts a C4-type zinc-finger fold.

Belongs to the AccD/PCCB family. As to quaternary structure, acetyl-CoA carboxylase is a heterohexamer composed of biotin carboxyl carrier protein (AccB), biotin carboxylase (AccC) and two subunits each of ACCase subunit alpha (AccA) and ACCase subunit beta (AccD). Requires Zn(2+) as cofactor.

The protein resides in the cytoplasm. The enzyme catalyses N(6)-carboxybiotinyl-L-lysyl-[protein] + acetyl-CoA = N(6)-biotinyl-L-lysyl-[protein] + malonyl-CoA. Its pathway is lipid metabolism; malonyl-CoA biosynthesis; malonyl-CoA from acetyl-CoA: step 1/1. Its function is as follows. Component of the acetyl coenzyme A carboxylase (ACC) complex. Biotin carboxylase (BC) catalyzes the carboxylation of biotin on its carrier protein (BCCP) and then the CO(2) group is transferred by the transcarboxylase to acetyl-CoA to form malonyl-CoA. This Blochmanniella floridana protein is Acetyl-coenzyme A carboxylase carboxyl transferase subunit beta.